A 303-amino-acid chain; its full sequence is tRNA dimethylallyltransferase (303 aa).

13-20 (GPTASGKS) provides a ligand contact to ATP. 15 to 20 (TASGKS) contributes to the substrate binding site. Interaction with substrate tRNA stretches follow at residues 38–41 (DSMQ) and 162–166 (QRLLR).

It belongs to the IPP transferase family. In terms of assembly, monomer. The cofactor is Mg(2+).

The enzyme catalyses adenosine(37) in tRNA + dimethylallyl diphosphate = N(6)-dimethylallyladenosine(37) in tRNA + diphosphate. In terms of biological role, catalyzes the transfer of a dimethylallyl group onto the adenine at position 37 in tRNAs that read codons beginning with uridine, leading to the formation of N6-(dimethylallyl)adenosine (i(6)A). The polypeptide is tRNA dimethylallyltransferase (Methylocella silvestris (strain DSM 15510 / CIP 108128 / LMG 27833 / NCIMB 13906 / BL2)).